A 683-amino-acid polypeptide reads, in one-letter code: Phenoloxidase 3 (683 aa).

The propeptide occupies 1 to 48; the sequence is MADKKNLLLLFDHPTEPVFMDKGGNGTVFDVPDSYVTDRYNQMCKKVQ. Cu cation is bound by residues His-209, His-213, and His-239. Glu-351 (proton acceptor) is an active-site residue. N-linked (GlcNAc...) asparagine glycosylation is present at Asn-358. Cu cation contacts are provided by His-366, His-370, and His-406. Residues Asn-492 and Asn-546 are each glycosylated (N-linked (GlcNAc...) asparagine). Disulfide bonds link Cys-574–Cys-617 and Cys-576–Cys-624.

It belongs to the tyrosinase family. It depends on Cu(2+) as a cofactor. Upon activation, a trypsin type protease cleaves prophenol oxidase to yield the active enzyme.

It is found in the secreted. The enzyme catalyses 2 L-dopa + O2 = 2 L-dopaquinone + 2 H2O. It catalyses the reaction L-tyrosine + O2 = L-dopaquinone + H2O. Functionally, this is a copper-containing oxidase that functions in the formation of pigments such as melanins and other polyphenolic compounds. Catalyzes the rate-limiting conversions of tyrosine to DOPA, DOPA to DOPA-quinone and possibly 5,6 dihydroxyindole to indole-5'6 quinone. The sequence is that of Phenoloxidase 3 (PPO3) from Drosophila melanogaster (Fruit fly).